Consider the following 365-residue polypeptide: Transcription factor MYB93 (365 aa).

2 consecutive HTH myb-type domains span residues 9 to 61 (ENGL…TNYL) and 62 to 116 (RPDI…KKKL). 2 DNA-binding regions (H-T-H motif) span residues 37 to 61 (WRAL…TNYL) and 89 to 112 (WSAI…NTHL).

As to quaternary structure, interacts with FBX5.

The protein resides in the nucleus. It localises to the cytoplasm. In terms of biological role, transcription factor that acts as a negative regulator of lateral root (LR) development. Required for normal auxin responses during LR development. May be part of a negative feedback loop stimulated specifically in the endodermis upon LR initiation to ensure that LRs are formed only in the correct place. This is Transcription factor MYB93 from Arabidopsis thaliana (Mouse-ear cress).